A 984-amino-acid polypeptide reads, in one-letter code: MLGWIAKKIIGTKNEREVKRLRKFVNQINELEKELDALTNKELVELAQELHDKIRFDEELKERVIKGEITPEVIKAFALVREAAKRTLGLRHFDVQLIGGLVLHEGKIAEMKTGEGKTLVATSPAVVNGMTDEGVHIVTVNDYLARRDAQWMGPIYKFLGLEVGVINSDGKTYLVEWVDPEKVKEAIENDVRVWPKGYYEEILPSEKVNIDAKKTYFTTLKEAEHRRKAYEAHITYGTNNEFGFDYLRDNLAFSKEEIVQVKGHNYAIVDEVDSILIDEARTPLIISGPAQIDSQIYHVADAVVRKLKKDKDFTVDEKNRTVNLTEQGIKKVEKMLGIDNLYDLKHVDLLHAILQSIRAHHLFKKDVHYIVRDGEVLIVDEFTGRVLPGRRWSDGLHQAIEVKEGVPVKEENQTLASITFQNYFKLYRKLAGMTGTAETEALEFKEIYGLDVVVIPTHKPMIRKDHPDLVFKTKEEKWERVVEEVLLNHIFGRPVLVGTVSIEDNEKLSSLLKNKKLLKEIANRNSFKRRLEETAKNLGVSPEEVQKKLEEVLKKGIPHNVLNAKHHEREAEIIAQAGRVGAVTIATNMAGRGTDILLGGNPEYLAKQMLKEKGINPEEATEEQFREALREAYRITEEEKEKVKKLGGLLVIGTERHESRRIDNQLRGRAGRQGDPGESRFIVSLEDDLLRLFGGERVSKLMDMLKIERGEPIESRMVSKALENAQKRVEAQNFQIRKRLYEFDSVMNIQRDVVYTLRRQLLEGENVHEKIKEFLKDIITQKVNELLPEDDPELWDLEPLKAFLKELTGREVEIPQVRDKEELIQKLYEELLKIYEEKEKEIGSPEAMRELERVILLNLLDNAWREHLHTLDRLREGIYLRGYAGKDPLIEYKREAYELFENMMENVKLNTLMTLFNVQIKSEEEIKEVEHEEEKKHQRLLEEAELQGVQGKSDKKPRPKTLKERLKEERLRKRKLKAKKKEQE.

ATP contacts are provided by residues glutamine 96, 114–118 (GEGKT), and aspartate 595. 2 stretches are compositionally biased toward basic and acidic residues: residues 930–942 (EHEE…RLLE) and 952–971 (KSDK…EERL). Positions 930-984 (EHEEEKKHQRLLEEAELQGVQGKSDKKPRPKTLKERLKEERLRKRKLKAKKKEQE) are disordered. A compositionally biased stretch (basic residues) spans 972–984 (RKRKLKAKKKEQE).

It belongs to the SecA family. Monomer and homodimer. Part of the essential Sec protein translocation apparatus which comprises SecA, SecYEG and auxiliary proteins SecDF. Other proteins may also be involved.

It localises to the cell inner membrane. The protein localises to the cytoplasm. It carries out the reaction ATP + H2O + cellular proteinSide 1 = ADP + phosphate + cellular proteinSide 2.. Functionally, part of the Sec protein translocase complex. Interacts with the SecYEG preprotein conducting channel. Has a central role in coupling the hydrolysis of ATP to the transfer of proteins into and across the cell membrane, serving as an ATP-driven molecular motor driving the stepwise translocation of polypeptide chains across the membrane. This is Protein translocase subunit SecA from Aquifex aeolicus (strain VF5).